Consider the following 1012-residue polypeptide: DNA polymerase catalytic subunit (1012 aa).

The protein belongs to the DNA polymerase type-B family.

It is found in the host nucleus. It carries out the reaction DNA(n) + a 2'-deoxyribonucleoside 5'-triphosphate = DNA(n+1) + diphosphate. The chain is DNA polymerase catalytic subunit (U38) from Homo sapiens (Human).